Here is a 177-residue protein sequence, read N- to C-terminus: uncharacterized protein (177 aa).

The next 4 helical transmembrane spans lie at 4–24 (IIILILLLMGTLLGLKRGFIL), 33–53 (ILSIAFAALFYKNVAPHLHWI), 80–100 (IAFIVLFIIAKILLRIIGSFL), and 115–135 (MLGAVLGFLEVYLFTFVLLYV).

Its subcellular location is the cell membrane. This is an uncharacterized protein from Bacillus subtilis (strain 168).